The following is a 179-amino-acid chain: Putative ankyrin repeat protein RF_0922 (179 aa).

ANK repeat units lie at residues 5 to 34, 40 to 72, 75 to 104, 110 to 139, and 145 to 174; these read KGCT…EQAI, NGST…INHV, NGNT…SQAI, NGDT…EQAI, and NGNT…KQAI.

This chain is Putative ankyrin repeat protein RF_0922, found in Rickettsia felis (strain ATCC VR-1525 / URRWXCal2) (Rickettsia azadi).